Consider the following 506-residue polypeptide: Ribose import ATP-binding protein RbsA 2 (506 aa).

ABC transporter domains are found at residues Leu5–Arg241 and Val251–Thr498. Position 37–44 (Gly37–Ser44) interacts with ATP.

It belongs to the ABC transporter superfamily. Ribose importer (TC 3.A.1.2.1) family. As to quaternary structure, the complex is composed of an ATP-binding protein (RbsA), two transmembrane proteins (RbsC) and a solute-binding protein (RbsB).

The protein localises to the cell inner membrane. The catalysed reaction is D-ribose(out) + ATP + H2O = D-ribose(in) + ADP + phosphate + H(+). Its function is as follows. Part of the ABC transporter complex RbsABC involved in ribose import. Responsible for energy coupling to the transport system. The protein is Ribose import ATP-binding protein RbsA 2 of Burkholderia ambifaria (strain ATCC BAA-244 / DSM 16087 / CCUG 44356 / LMG 19182 / AMMD) (Burkholderia cepacia (strain AMMD)).